We begin with the raw amino-acid sequence, 309 residues long: Enoyl-CoA hydratase 2, peroxisomal (309 aa).

Substrate contacts are provided by residues 95 to 96 (HG), K124, 208 to 213 (DYNPLH), G231, and F261. A MaoC-like domain is found at 183 to 295 (PQRQPLTVCE…TKVKERNKTV (113 aa)). The Microbody targeting signal signature appears at 307–309 (SSL).

Ubiquitous.

The protein localises to the peroxisome. It catalyses the reaction a (3R)-3-hydroxyacyl-CoA = a (2E)-enoyl-CoA + H2O. It participates in lipid metabolism; fatty acid beta-oxidation. Bidirectional monofunctional enoyl-CoA hydratase 2 involved in the degradation of even cis-unsaturated fatty acids. Devoid of 3-hydroxyacyl-CoA dehydrogenase activity. This is Enoyl-CoA hydratase 2, peroxisomal (ECH2) from Arabidopsis thaliana (Mouse-ear cress).